The chain runs to 535 residues: Probable serine/threonine protein phosphatase 2A regulatory subunit B''delta (535 aa).

Residues 67-104 (SGTNSGSNSPLASMFPARNGPPLSPRNSTGSPRIARQR) are disordered. EF-hand domains lie at 174 to 209 (VPSFFSTSIFKKVDTNNTGFVKREDFIDYWVKGNML) and 387 to 422 (SSEPSLEYWFKCIDLDANGVLTRNELQFFYEEQLHR). 4 residues coordinate Ca(2+): aspartate 400, aspartate 402, asparagine 404, and glutamate 411.

As to quaternary structure, PP2A consists of a common heterodimeric core enzyme, composed of a 36 kDa catalytic subunit (subunit C) and a 65 kDa constant regulatory subunit (PR65 or subunit A), that associates with a variety of regulatory subunits. Proteins that associate with the core dimer include three families of regulatory subunits B (the R2/B/PR55/B55, R3/B''/PR72/PR130/PR59 and R5/B'/B56 families) and cell signaling molecules.

In terms of biological role, probable regulatory subunit of type 2A protein phosphatase. The protein is Probable serine/threonine protein phosphatase 2A regulatory subunit B''delta (B''DELTA) of Arabidopsis thaliana (Mouse-ear cress).